The chain runs to 606 residues: R-linalool synthase, chloroplastic (606 aa).

The transit peptide at 1 to 51 (MCTIISVNHHHVAILSKPKVKLFHTKNKRSASINLPWSLSPSSSAASRPIS) directs the protein to the chloroplast. Residues Arg-326, Asp-363, Asp-367, Arg-504, and Asp-507 each coordinate (2E)-geranyl diphosphate. The Mg(2+) site is built by Asp-363 and Asp-367. The DDXXD motif signature appears at 363–367 (DDVYD). Residues Asp-507, Thr-511, and Glu-515 each coordinate Mg(2+).

Belongs to the terpene synthase family. Tpsb subfamily. Requires Mg(2+) as cofactor. It depends on Mn(2+) as a cofactor.

It is found in the plastid. It localises to the chloroplast. The enzyme catalyses (2E)-geranyl diphosphate + H2O = (R)-linalool + diphosphate. It functions in the pathway secondary metabolite biosynthesis; terpenoid biosynthesis. Functionally, monoterpene synthase that catalyzes the formation of (3R)-linalool from geranyl diphosphate, but not from farnesyl diphosphate or geranylgeranyl diphosphate. The polypeptide is R-linalool synthase, chloroplastic (Mentha aquatica (Water mint)).